The sequence spans 193 residues: Acyl carrier protein phosphodiesterase (193 aa).

The protein belongs to the AcpH family.

The catalysed reaction is holo-[ACP] + H2O = apo-[ACP] + (R)-4'-phosphopantetheine + H(+). Its function is as follows. Converts holo-ACP to apo-ACP by hydrolytic cleavage of the phosphopantetheine prosthetic group from ACP. The polypeptide is Acyl carrier protein phosphodiesterase (Salmonella dublin (strain CT_02021853)).